Reading from the N-terminus, the 389-residue chain is Chalcone synthase 1 (389 aa).

C164 is a catalytic residue.

Belongs to the thiolase-like superfamily. Chalcone/stilbene synthases family.

The enzyme catalyses (E)-4-coumaroyl-CoA + 3 malonyl-CoA + 3 H(+) = 2',4,4',6'-tetrahydroxychalcone + 3 CO2 + 4 CoA. It participates in secondary metabolite biosynthesis; flavonoid biosynthesis. The primary product of this enzyme is 4,2',4',6'-tetrahydroxychalcone (also termed naringenin-chalcone or chalcone) which can under specific conditions spontaneously isomerize into naringenin. The protein is Chalcone synthase 1 (CHS1) of Daucus carota (Wild carrot).